The chain runs to 192 residues: A-type ATP synthase subunit E (192 aa).

It belongs to the V-ATPase E subunit family. As to quaternary structure, has multiple subunits with at least A(3), B(3), C, D, E, F, H, I and proteolipid K(x).

It is found in the cell membrane. Its function is as follows. Component of the A-type ATP synthase that produces ATP from ADP in the presence of a proton gradient across the membrane. The sequence is that of A-type ATP synthase subunit E from Methanocorpusculum labreanum (strain ATCC 43576 / DSM 4855 / Z).